The chain runs to 479 residues: Glycine betaine methyltransferase (479 aa).

Belongs to the trimethylamine methyltransferase family.

It catalyses the reaction Co(I)-[glycine betaine-specific corrinoid protein] + glycine betaine + H(+) = methyl-Co(III)-[glycine betaine-specific corrinoid protein] + N,N-dimethylglycine. In terms of biological role, methyltransferase able to methylate free cob(I)alamin in vitro, using glycine betaine as the methyl donor, yealding methylcobalamin (methylCbl) and dimethylglycine. In vivo, probably carries out the methylation of a corrinoid protein, likely the adjacently encoded DSY3155, with glycine betaine, to then supply methyl groups to tetrahydrofolate (THF) for ultimate conversion to carbon dioxide; oxidation of the methyl group would also provide reducing equivalents for anaerobic respiration. Thus, may function in the pathway that allows anaerobic methylotrophic growth of D.hafniense using glycine betaine. Cannot use quaternary amines such as carnitine and choline as substrates, nor tertiary amines such as dimethylglycine or trimethylamine. In Desulfitobacterium hafniense (strain Y51), this protein is Glycine betaine methyltransferase.